A 154-amino-acid chain; its full sequence is Large ribosomal subunit protein uL23 (154 aa).

Belongs to the universal ribosomal protein uL23 family.

In terms of biological role, this protein binds to a specific region on the 26S rRNA. This Daucus carota (Wild carrot) protein is Large ribosomal subunit protein uL23 (RPL23A).